We begin with the raw amino-acid sequence, 256 residues long: tRNA (guanine-N(1)-)-methyltransferase (256 aa).

S-adenosyl-L-methionine is bound by residues glycine 119 and 139–144 (IGDYVV).

The protein belongs to the RNA methyltransferase TrmD family. Homodimer.

The protein resides in the cytoplasm. The catalysed reaction is guanosine(37) in tRNA + S-adenosyl-L-methionine = N(1)-methylguanosine(37) in tRNA + S-adenosyl-L-homocysteine + H(+). Its function is as follows. Specifically methylates guanosine-37 in various tRNAs. The sequence is that of tRNA (guanine-N(1)-)-methyltransferase from Nitrosospira multiformis (strain ATCC 25196 / NCIMB 11849 / C 71).